The chain runs to 370 residues: MPVSKKILFLAGDGIGPEVMAQVRRVMDWLNQTGRTAFEVEDALVGGAAYDAQGTPLHDDTVALALAADAVLLGAVGGPKWDASLPFELKPERGLLRLRKDLELFANLRPAMVFDALAEASTLKTELVSGLDVMIVRELTGGVYFGQPRGISALPNGERRGVNTQVYDTHEIVRVAKVAFDLAGKRGKRLCSVEKANVMESGLLWREEVTKLGADYPEIALSHMYADNCAMQLVRQPKQFDVIVTDNLFGDILSDCAAMLTGSLGMLPSASLGAADAAGNRRAMYEPVHGSAPDIAGQDKANPLATILSFSMMLRYSFDLAEEADLVDNAVRGVLAKGLRTGDIFQPGKTLVGTTGMGDALLAEMAQLAN.

The substrate site is built by R99, R109, R137, and D227. Residues D227, D251, and D255 each contribute to the Mg(2+) site. Position 290 to 302 (290 to 302 (GSAPDIAGQDKAN)) interacts with NAD(+).

It belongs to the isocitrate and isopropylmalate dehydrogenases family. LeuB type 1 subfamily. In terms of assembly, homodimer. Mg(2+) is required as a cofactor. Requires Mn(2+) as cofactor.

It is found in the cytoplasm. It catalyses the reaction (2R,3S)-3-isopropylmalate + NAD(+) = 4-methyl-2-oxopentanoate + CO2 + NADH. The protein operates within amino-acid biosynthesis; L-leucine biosynthesis; L-leucine from 3-methyl-2-oxobutanoate: step 3/4. In terms of biological role, catalyzes the oxidation of 3-carboxy-2-hydroxy-4-methylpentanoate (3-isopropylmalate) to 3-carboxy-4-methyl-2-oxopentanoate. The product decarboxylates to 4-methyl-2 oxopentanoate. This chain is 3-isopropylmalate dehydrogenase, found in Rhodospirillum rubrum (strain ATCC 11170 / ATH 1.1.1 / DSM 467 / LMG 4362 / NCIMB 8255 / S1).